The primary structure comprises 52 residues: MASKNREIIKLKSTESSEMYWTVKNKRKTTGRLELKKYDRKLRKHVIFKEAK.

This sequence belongs to the bacterial ribosomal protein bL33 family.

This Chlamydia muridarum (strain MoPn / Nigg) protein is Large ribosomal subunit protein bL33 (rpmG).